Consider the following 660-residue polypeptide: Squalene--hopene cyclase (660 aa).

One copy of the PFTB 1 repeat lies at Glu-73–Gly-114. Asp-394 serves as the catalytic Proton donor. PFTB repeat units lie at residues Ile-419 to Leu-460 and Ile-536 to Ala-586.

It belongs to the terpene cyclase/mutase family.

It localises to the cell membrane. The enzyme catalyses squalene = hop-22(29)-ene. The catalysed reaction is squalene + H2O = hopan-22-ol. Its pathway is secondary metabolite biosynthesis; hopanoid biosynthesis. In terms of biological role, catalyzes the cyclization of squalene into hopene. The chain is Squalene--hopene cyclase (shc) from Bradyrhizobium diazoefficiens (strain JCM 10833 / BCRC 13528 / IAM 13628 / NBRC 14792 / USDA 110).